A 48-amino-acid chain; its full sequence is Ambineela (48 aa).

Monomer. The blue color is due to an unidentified non-fluorescent cofactor, covalently bound to it.

Its function is as follows. Ambineela is a blue protein and has a pI of 8.7. The chain is Ambineela from Acidianus ambivalens (Desulfurolobus ambivalens).